A 304-amino-acid chain; its full sequence is MNAPDSTLVKAFLLDLQHRICNGLEALDGSAKFAEDAWKREEGGGGQSRVLTGGTVFEQAGVNFSHVMGASMPASATAHRPELAGRSFEAMGVSLVIHPNNPHIPTTHANVRFFIAHKDGADPVWWFGGGFDLTPYYPYLEDVVEWHQSAKSLCEPFGDEIYPEYKQWCDEYFFLPHRNETRGVGGLFFDDLNKQGFDTSFAFMQAVGNGFLTAYAPIVERRKDTVYGEHERQFQLYRRGRYVEFNLVYDRGTLFGLQTGGRTESILMSMPPLVRWEYAYTPEAGSAEAALYSDYLKPRDWLTL.

A substrate-binding site is contributed by Ser94. Positions 98 and 108 each coordinate a divalent metal cation. Catalysis depends on His108, which acts as the Proton donor. 110 to 112 (NVR) is a binding site for substrate. A divalent metal cation-binding residues include His147 and His177. The segment at 242 to 277 (YVEFNLVYDRGTLFGLQTGGRTESILMSMPPLVRWE) is important for dimerization. Position 260–262 (260–262 (GGR)) interacts with substrate.

Belongs to the aerobic coproporphyrinogen-III oxidase family. In terms of assembly, homodimer. The cofactor is a divalent metal cation.

It localises to the cytoplasm. The catalysed reaction is coproporphyrinogen III + O2 + 2 H(+) = protoporphyrinogen IX + 2 CO2 + 2 H2O. It functions in the pathway porphyrin-containing compound metabolism; protoporphyrin-IX biosynthesis; protoporphyrinogen-IX from coproporphyrinogen-III (O2 route): step 1/1. Functionally, involved in the heme biosynthesis. Catalyzes the aerobic oxidative decarboxylation of propionate groups of rings A and B of coproporphyrinogen-III to yield the vinyl groups in protoporphyrinogen-IX. This Shewanella halifaxensis (strain HAW-EB4) protein is Oxygen-dependent coproporphyrinogen-III oxidase.